A 326-amino-acid chain; its full sequence is Acetyl-coenzyme A carboxylase carboxyl transferase subunit beta (326 aa).

In terms of domain architecture, CoA carboxyltransferase N-terminal spans 32–301 (LWTKCPACGV…ILPPLNADSN (270 aa)). C36, C39, C55, and C58 together coordinate Zn(2+). The C4-type zinc-finger motif lies at 36–58 (CPACGVLTYTKDLQGNWMVCVEC).

The protein belongs to the AccD/PCCB family. As to quaternary structure, acetyl-CoA carboxylase is a heterohexamer composed of biotin carboxyl carrier protein (AccB), biotin carboxylase (AccC) and two subunits each of ACCase subunit alpha (AccA) and ACCase subunit beta (AccD). Zn(2+) serves as cofactor.

The protein resides in the cytoplasm. The enzyme catalyses N(6)-carboxybiotinyl-L-lysyl-[protein] + acetyl-CoA = N(6)-biotinyl-L-lysyl-[protein] + malonyl-CoA. It participates in lipid metabolism; malonyl-CoA biosynthesis; malonyl-CoA from acetyl-CoA: step 1/1. In terms of biological role, component of the acetyl coenzyme A carboxylase (ACC) complex. Biotin carboxylase (BC) catalyzes the carboxylation of biotin on its carrier protein (BCCP) and then the CO(2) group is transferred by the transcarboxylase to acetyl-CoA to form malonyl-CoA. In Synechocystis sp. (strain ATCC 27184 / PCC 6803 / Kazusa), this protein is Acetyl-coenzyme A carboxylase carboxyl transferase subunit beta.